Here is a 576-residue protein sequence, read N- to C-terminus: Hemagglutinin-neuraminidase (576 aa).

The span at 1-10 shows a compositional bias: basic and acidic residues; sequence MDGDRGKRDS. Positions 1–24 are disordered; sequence MDGDRGKRDSYWSTSPSGSTTKLA. Residues 1–37 are Intravirion-facing; the sequence is MDGDRGKRDSYWSTSPSGSTTKLASGWERSSKVDTWL. The interval 10–14 is incorporation in virion; it reads SYWST. The segment covering 11 to 23 has biased composition (polar residues); the sequence is YWSTSPSGSTTKL. Residues 38-58 form a helical membrane-spanning segment; that stretch reads LILSFTQWALSIATVIICIII. The segment at 59–140 is involved in interaction with F protein; the sequence is SARQGYSTKE…RQELTQLCES (82 aa). Residues 59-576 lie on the Virion surface side of the membrane; sequence SARQGYSTKE…SIPKLCKAES (518 aa). The N-linked (GlcNAc...) asparagine; by host glycan is linked to Asn-77. 4 cysteine pairs are disulfide-bonded: Cys-192–Cys-216, Cys-258–Cys-271, Cys-357–Cys-469, and Cys-463–Cys-473. The segment at 254–259 is involved in neuraminidase activity; the sequence is NRKSCS. N-linked (GlcNAc...) asparagine; by host glycosylation is found at Asn-499 and Asn-511. The cysteines at positions 536 and 545 are disulfide-linked.

It belongs to the paramyxoviruses hemagglutinin-neuraminidase family. Homotetramer; composed of disulfide-linked homodimers. Interacts with F protein trimer. In terms of processing, N-glycosylated; glycans consist of a mixture of high mannose-type oligosaccharides and of complex-type oligosaccharides.

The protein localises to the virion membrane. The protein resides in the host cell membrane. The catalysed reaction is Hydrolysis of alpha-(2-&gt;3)-, alpha-(2-&gt;6)-, alpha-(2-&gt;8)- glycosidic linkages of terminal sialic acid residues in oligosaccharides, glycoproteins, glycolipids, colominic acid and synthetic substrates.. In terms of biological role, attaches the virus to sialic acid-containing cell receptors and thereby initiating infection. Binding of HN protein to the receptor induces a conformational change that allows the F protein to trigger virion/cell membranes fusion. Functionally, neuraminidase activity ensures the efficient spread of the virus by dissociating the mature virions from the neuraminic acid containing glycoproteins. This Sendai virus (strain Harris) (SeV) protein is Hemagglutinin-neuraminidase (HN).